The primary structure comprises 115 residues: Pycsar effector protein TpPycTM (115 aa).

Transmembrane regions (helical) follow at residues 44–64 (IGNL…YATN) and 74–94 (VWNI…VILV).

The protein resides in the cell inner membrane. In terms of biological role, pycsar (pyrimidine cyclase system for antiphage resistance) provides immunity against bacteriophage. The pyrimidine cyclase (PycC) synthesizes cyclic nucleotides in response to infection; these serve as specific second messenger signals. The signals activate the adjacent effector, leading to bacterial cell death and abortive phage infection. A clade C Pycsar system. The effector gene of a two-gene Pycsar system. Expression of this and adjacent uridylate cyclase TpPycC (AC A0A1T4LJ54) probably confers resistance to bacteriophage. The genes are probably only expressed in response to bacteriophage infection. Probably only responds to cUMP (produced by its cognate NTP cyclase), acts by impairing membrane integrity. In Treponema porcinum, this protein is Pycsar effector protein TpPycTM.